The chain runs to 396 residues: Stearoyl-[acyl-carrier-protein] 9-desaturase, chloroplastic (396 aa).

Residues 1–33 (MALRITPVTLQSERYRSFSFPKKANLRSPKFAM) constitute a chloroplast transit peptide. Position 34 is a blocked amino end (Ala); partial (Ala-34). Fe cation-binding residues include Glu-138, Glu-176, His-179, Glu-229, Glu-262, and His-265.

This sequence belongs to the fatty acid desaturase type 2 family. As to quaternary structure, homodimer. Fe(2+) is required as a cofactor. In terms of processing, most of the N-terminus is blocked.

The protein localises to the plastid. It is found in the chloroplast. It carries out the reaction octadecanoyl-[ACP] + 2 reduced [2Fe-2S]-[ferredoxin] + O2 + 2 H(+) = (9Z)-octadecenoyl-[ACP] + 2 oxidized [2Fe-2S]-[ferredoxin] + 2 H2O. It functions in the pathway lipid metabolism; fatty acid metabolism. Converts stearoyl-ACP to oleoyl-ACP by introduction of a cis double bond between carbons 9 and 10 of the acyl chain. This Carthamus tinctorius (Safflower) protein is Stearoyl-[acyl-carrier-protein] 9-desaturase, chloroplastic.